An 89-amino-acid chain; its full sequence is uncharacterized protein (89 aa).

This is an uncharacterized protein from Shigella flexneri.